A 193-amino-acid polypeptide reads, in one-letter code: Dirigent protein 11 (193 aa).

A signal peptide spans 1-33 (MLQITNMATPFLLLLLPLIFSTVLLLTITVTQS). N-linked (GlcNAc...) asparagine glycans are attached at residues Asn-78 and Asn-136.

The protein belongs to the plant dirigent protein family. As to quaternary structure, homodimer.

It is found in the secreted. The protein resides in the extracellular space. Its subcellular location is the apoplast. In terms of biological role, dirigent proteins impart stereoselectivity on the phenoxy radical-coupling reaction, yielding optically active lignans from two molecules of coniferyl alcohol in the biosynthesis of lignans, flavonolignans, and alkaloids and thus plays a central role in plant secondary metabolism. This is Dirigent protein 11 (DIR11) from Arabidopsis thaliana (Mouse-ear cress).